The sequence spans 125 residues: Cytochrome c-556 (125 aa).

Heme-binding residues include Met-13, Cys-113, Cys-116, and His-117. Heme c contacts are provided by Met-13, Cys-113, Cys-116, and His-117.

Monomer. Binds 1 heme c group covalently per subunit.

Its function is as follows. Low-spin monoheme cytochrome c. The polypeptide is Cytochrome c-556 (Agrobacterium tumefaciens (strain apple 185)).